A 578-amino-acid polypeptide reads, in one-letter code: Acyl-CoA synthetase ACTT5 (578 aa).

211–222 (RLTTSGTTGLPK) is an AMP binding site. An AMP-binding region spans residues 472–551 (ELEAALLQAK…DEIPRSPTGK (80 aa)).

It belongs to the ATP-dependent AMP-binding enzyme family.

It participates in mycotoxin biosynthesis. Its function is as follows. Acyl-CoA synthetase; part of the gene clusters that mediate the biosynthesis of the host-selective toxins (HSTs) ACT-toxins responsible for brown spot of tangerine disease by the tangerine pathotype which affects tangerines and mandarins. ACT-toxins consist of three moieties, 9,10-epoxy-8-hydroxy-9-methyl-decatrienoic acid (EDA), valine and a polyketide. ACT-toxin I is toxic to both citrus and pear; toxin II the 5''-deoxy derivative of ACT-toxin I, is highly toxic to pear and slightly toxic to citrus. On cellular level, ACT-toxins affect plasma membrane of susceptible cells and cause a sudden increase in loss of K(+) after a few minutes of toxin treatment. The acyl-CoA ligase ACTT1, the hydrolase ACTT2, the enoyl-CoA hydratases ACTT3 and ACTT6, and the acyl-CoA synthetase ACTT5 are all involved in the biosynthesis of the AK-, AF- and ACT-toxin common 9,10-epoxy-8-hydroxy-9-methyl-decatrienoic acid (EDA) structural moiety. The exact role of each enzyme, and of additional enzymes identified within the AF-toxin clusters have still to be determined. On the other hand, ACTTS1 to ACTTS4 are specific to the tangerine pathotype. The function of ACTTS3 is to elongate the polyketide chain portion of ACT-toxin that is unique to this toxin. The enoyl-reductase ACTTS2 might complement the missing enoyl-reductase (ER) domain in ACTTS3 in the synthesis of the polyketide portion of ACT-toxin. The roles of the nonribosomal peptide synthetases-related proteins ACTTS1 and ACTTS4 have also still not been elucidated. The sequence is that of Acyl-CoA synthetase ACTT5 from Alternaria alternata (Alternaria rot fungus).